The chain runs to 157 residues: MRIIGIDPGLARVGYGIIEIENERKILLDCGVIETGKDKKEEDRLYEIFQDLNELINHWNPTSAAVEKFFFYRSSTTISVVQARGVIMMVLASKKINVSEYSPAQIKLTIAGSGKASKKDILDAVMYNLDLNKPPKPDDSADALAIALTKLNEDGFN.

Active-site residues include Asp-7, Glu-67, and Asp-139. Residues Asp-7, Glu-67, and Asp-139 each coordinate Mg(2+).

The protein belongs to the RuvC family. In terms of assembly, homodimer which binds Holliday junction (HJ) DNA. The HJ becomes 2-fold symmetrical on binding to RuvC with unstacked arms; it has a different conformation from HJ DNA in complex with RuvA. In the full resolvosome a probable DNA-RuvA(4)-RuvB(12)-RuvC(2) complex forms which resolves the HJ. Mg(2+) is required as a cofactor.

The protein localises to the cytoplasm. The catalysed reaction is Endonucleolytic cleavage at a junction such as a reciprocal single-stranded crossover between two homologous DNA duplexes (Holliday junction).. In terms of biological role, the RuvA-RuvB-RuvC complex processes Holliday junction (HJ) DNA during genetic recombination and DNA repair. Endonuclease that resolves HJ intermediates. Cleaves cruciform DNA by making single-stranded nicks across the HJ at symmetrical positions within the homologous arms, yielding a 5'-phosphate and a 3'-hydroxyl group; requires a central core of homology in the junction. The consensus cleavage sequence is 5'-(A/T)TT(C/G)-3'. Cleavage occurs on the 3'-side of the TT dinucleotide at the point of strand exchange. HJ branch migration catalyzed by RuvA-RuvB allows RuvC to scan DNA until it finds its consensus sequence, where it cleaves and resolves the cruciform DNA. In Prochlorococcus marinus (strain MIT 9301), this protein is Crossover junction endodeoxyribonuclease RuvC.